We begin with the raw amino-acid sequence, 2545 residues long: Methylphloroacetophenone synthase (2545 aa).

An N-terminal acylcarrier protein transacylase (SAT) domain region spans residues 8–261 (AFGALAPWPA…HVAIHEGIPQ (254 aa)). Positions 383-798 (KDAIAIIGMG…GSNAAMIVLE (416 aa)) constitute a Ketosynthase family 3 (KS3) domain. Active-site for beta-ketoacyl synthase activity residues include Cys547, His682, and His721. Residues 914 to 1218 (LCFGGQVSDR…VSLQLNKPNS (305 aa)) form a malonyl-CoA:ACP transacylase (MAT) domain region. The active-site For acyl/malonyl transferase activity is the Ser1001. The tract at residues 1293 to 1423 (LPAVLIRLKS…GTVNLKVADD (131 aa)) is N-terminal hotdog fold. One can recognise a PKS/mFAS DH domain in the interval 1293–1605 (LPAVLIRLKS…FTDIRRPVPI (313 aa)). The interval 1296-1604 (VLIRLKSFDS…NFTDIRRPVP (309 aa)) is product template (PT) domain. Residues 1449–1605 (RSESLRGNVL…FTDIRRPVPI (157 aa)) are C-terminal hotdog fold. In terms of domain architecture, Carrier spans 1657 to 1731 (TSIYEDICGL…SLVDYLHGKG (75 aa)). An O-(pantetheine 4'-phosphoryl)serine modification is found at Ser1691. Residues 1748 to 1768 (SSSHAISTGASSPPDSSGASA) show a composition bias toward low complexity. Residues 1748-1773 (SSSHAISTGASSPPDSSGASAMTTPP) form a disordered region. Residues 1931–2163 (FGASETKLLN…GFKHVSWTDG (233 aa)) form a methyltransferase (CMeT) domain region. Positions 2198 to 2544 (AGVPMEEVVW…YDFICRQLGM (347 aa)) are claisen cyclase (CLC) domain. Residues Ser2321, Asp2481, and His2513 each act as for thioesterase activity in the active site.

Methylphloroacetophenone synthase; part of the gene cluster that mediates the biosynthesis of usnic acid, a dibenzofuran lichen product possessing a broad spectrum of biological activities. Two genes, mpas and mpao, comprise the usnic acid biosynthetic gene cluster with a single post-PKS enzyme, the methylphloracetophenone oxidase (mpao). The methylphloroacetophenone synthase (mpas) is a non-reducing polyketide synthase that produces methylphloracetophenone from acetate via a methylated tetraketide intermediate. The methylphloroacetophenone oxidase then carries out the oxidative dimerization of methylphloracetophenone to usnic acid. This is Methylphloroacetophenone synthase from Cladonia uncialis (Cup lichen).